Reading from the N-terminus, the 372-residue chain is Fatty acid 2-hydroxylase (372 aa).

The 79-residue stretch at 8–86 (AASFSPSEVQ…LEQYYVGELR (79 aa)) folds into the Cytochrome b5 heme-binding domain. H43 and H69 together coordinate heme. 2 helical membrane passes run 168-188 (VWYS…WSYY) and 213-233 (SMFP…EYLI). The region spanning 219 to 361 (FMLGTFLWSL…TKLWDYCFHT (143 aa)) is the Fatty acid hydroxylase domain. Residues H234, H239, H257, H260, and H261 each coordinate Zn(2+). 2 helical membrane-spanning segments follow: residues 268–288 (SRLV…YLCM) and 290–310 (LILP…GYVL). Residues H315, H319, H336, H339, and H340 each coordinate Zn(2+).

The protein belongs to the sterol desaturase family. SCS7 subfamily. Requires Zn(2+) as cofactor. In terms of tissue distribution, detected in differentiating cultured keratinocytes (at protein level). Detected in epidermis and cultured keratinocytes. Highly expressed in brain and colon. Detected at lower levels in testis, prostate, pancreas and kidney.

The protein resides in the endoplasmic reticulum membrane. The protein localises to the microsome membrane. It carries out the reaction a 1,2-saturated fatty acid + 2 Fe(II)-[cytochrome b5] + O2 + 2 H(+) = a (R)-2-hydroxy fatty acid + 2 Fe(III)-[cytochrome b5] + H2O. The catalysed reaction is hexadecanoate + 2 Fe(II)-[cytochrome b5] + O2 + 2 H(+) = (R)-2-hydroxyhexadecanoate + 2 Fe(III)-[cytochrome b5] + H2O. The enzyme catalyses octadecanoate + 2 Fe(II)-[cytochrome b5] + O2 + 2 H(+) = (R)-2-hydroxyoctadecanoate + 2 Fe(III)-[cytochrome b5] + H2O. It catalyses the reaction docosanoate + 2 Fe(II)-[cytochrome b5] + O2 + 2 H(+) = 2-hydroxydocosanoate + 2 Fe(III)-[cytochrome b5] + H2O. It carries out the reaction tetracosanoate + 2 Fe(II)-[cytochrome b5] + O2 + 2 H(+) = (R)-2-hydroxytetracosanoate + 2 Fe(III)-[cytochrome b5] + H2O. It participates in lipid metabolism; fatty acid metabolism. The protein operates within sphingolipid metabolism; galactosylceramide biosynthesis. Functionally, catalyzes the hydroxylation of free fatty acids at the C-2 position to produce 2-hydroxy fatty acids, which are building blocks of sphingolipids and glycosphingolipids common in neural tissue and epidermis. FA2H is stereospecific for the production of (R)-2-hydroxy fatty acids. Plays an essential role in the synthesis of galactosphingolipids of the myelin sheath. Responsible for the synthesis of sphingolipids and glycosphingolipids involved in the formation of epidermal lamellar bodies critical for skin permeability barrier. Participates in the synthesis of glycosphingolipids and a fraction of type II wax diesters in sebaceous gland, specifically regulating hair follicle homeostasis. Involved in the synthesis of sphingolipids of plasma membrane rafts, controlling lipid raft mobility and trafficking of raft-associated proteins. The chain is Fatty acid 2-hydroxylase from Homo sapiens (Human).